A 103-amino-acid chain; its full sequence is Large ribosomal subunit protein bL21 (103 aa).

This sequence belongs to the bacterial ribosomal protein bL21 family. As to quaternary structure, part of the 50S ribosomal subunit. Contacts protein L20.

Its function is as follows. This protein binds to 23S rRNA in the presence of protein L20. This chain is Large ribosomal subunit protein bL21, found in Photobacterium profundum (strain SS9).